Reading from the N-terminus, the 228-residue chain is Octanoyltransferase (228 aa).

Residues 32–214 (DVVPDTVLLV…HLRRLFERDW (183 aa)) form the BPL/LPL catalytic domain. Substrate-binding positions include 77-84 (RGGDVTYH), 144-146 (SVG), and 157-159 (GIA). Cys175 functions as the Acyl-thioester intermediate in the catalytic mechanism.

It belongs to the LipB family.

The protein resides in the cytoplasm. It carries out the reaction octanoyl-[ACP] + L-lysyl-[protein] = N(6)-octanoyl-L-lysyl-[protein] + holo-[ACP] + H(+). The protein operates within protein modification; protein lipoylation via endogenous pathway; protein N(6)-(lipoyl)lysine from octanoyl-[acyl-carrier-protein]: step 1/2. Its function is as follows. Catalyzes the transfer of endogenously produced octanoic acid from octanoyl-acyl-carrier-protein onto the lipoyl domains of lipoate-dependent enzymes. Lipoyl-ACP can also act as a substrate although octanoyl-ACP is likely to be the physiological substrate. The chain is Octanoyltransferase from Syntrophobacter fumaroxidans (strain DSM 10017 / MPOB).